We begin with the raw amino-acid sequence, 830 residues long: MDVSYNWLNEYVDHDWSPKELAERLTMAGLEVETVRPLGQSLDGVVVGKVTAVREHPNADRLVLCDVDLGDGAPSQIACGAPNVAAGQKVPVATVGTTLSRPDPDDPEALQELTVEARELRGEASNGMICAEDELGLSDDHAGIMVLDDDTPVGTPFPEYLDAHGMPSTDAVLDIELTPNRPDAASHLGVARDVSALADSELRTPTVDTPSPGGPVAEEITVDLRDEAGCPRYVALLVRGVDVTESPLWLRRRLTAIGLQPRNHVVDVTNFVLHECGQPLHAFDLDAIADDTIVVRRTDDETPFTTLDGEERDLPEDTLLICDAEAPVAVAGVMGGANSEVSADTTDVLIESAYFDPSTIRRTAKALDLQTDSSYRFERGVDRDGQVWAAARAAELIAKLGGGTVVPGLVDEHPSPPAEKTIALRPDRLTQVLGTEVPTDEGTRLLGAIGFDVEAGEDALHCTVPTWRPDVSIEEDLIEEVARLHGYDQIPEPERVPVPSRTPEQPPEETLERQARQLLKGLGYREIYTNSMLRTDRAERFNVPPAGSDRAPVVETKNPISEEMAALRPRLLPGALEVMQHNRNHGQEALRVFEFGRVFRRAAEPDDPIVPGYSEHPALLVALSGPHAPTGWDTEPRSADIFDLKGTVETLLDDLRVPALQVRPRDAGATDEAPPVTQHHIDVAAGDTPLGTVARVRDDVAADFDLDTPVFVAEFHWAALVDSATAEQHRDYEPVSRFPVVDRDLAVLVPADQPVGPLQRAIREAGAPLLRRVDVFDTYAGEGIDEDTKSVAFTLRFGADRTLTDEEVDARLDAIVERLAENHGARLRQQ.

A tRNA-binding domain is found at 39 to 158 (GQSLDGVVVG…DDTPVGTPFP (120 aa)). One can recognise a B5 domain in the interval 417–492 (PAEKTIALRP…RLHGYDQIPE (76 aa)). Positions 470, 476, 479, and 480 each coordinate Mg(2+). The disordered stretch occupies residues 490–510 (IPEPERVPVPSRTPEQPPEET). In terms of domain architecture, FDX-ACB spans 736–828 (SRFPVVDRDL…LAENHGARLR (93 aa)).

This sequence belongs to the phenylalanyl-tRNA synthetase beta subunit family. Type 1 subfamily. In terms of assembly, tetramer of two alpha and two beta subunits. The cofactor is Mg(2+).

The protein resides in the cytoplasm. The catalysed reaction is tRNA(Phe) + L-phenylalanine + ATP = L-phenylalanyl-tRNA(Phe) + AMP + diphosphate + H(+). In Salinibacter ruber (strain DSM 13855 / M31), this protein is Phenylalanine--tRNA ligase beta subunit.